Here is a 298-residue protein sequence, read N- to C-terminus: Inosose dehydratase (298 aa).

This sequence belongs to the IolE/MocC family. Glutathione is required as a cofactor. Co(2+) serves as cofactor. The cofactor is Mn(2+).

It carries out the reaction scyllo-inosose = 3D-3,5/4-trihydroxycyclohexane-1,2-dione + H2O. Its pathway is polyol metabolism; myo-inositol degradation into acetyl-CoA; acetyl-CoA from myo-inositol: step 2/7. Functionally, catalyzes the dehydration of inosose (2-keto-myo-inositol, 2KMI or 2,4,6/3,5-pentahydroxycyclohexanone) to 3D-(3,5/4)-trihydroxycyclohexane-1,2-dione (D-2,3-diketo-4-deoxy-epi-inositol). This chain is Inosose dehydratase, found in Clostridium botulinum (strain Alaska E43 / Type E3).